The sequence spans 105 residues: Ig lambda chain C region (105 aa).

In terms of domain architecture, Ig-like spans 2 to 100 (PKAAPTVNLF…EGTIVEKTVT (99 aa)). The cysteines at positions 27 and 86 are disulfide-linked.

This chain is Ig lambda chain C region, found in Sus scrofa (Pig).